The primary structure comprises 657 residues: Transmembrane protein 232 (657 aa).

2 consecutive transmembrane segments (helical) span residues 168–188 and 353–373; these read IGYLVFLRLFIFFLHGHLESF and WAWNVVYIYTVILAEICLYAA.

It is found in the membrane. Its function is as follows. Plays a critical role for male fertility and sperm motility by regulating sperm cytoplasm removal and maintaining axoneme integrity. This is Transmembrane protein 232 (TMEM232) from Homo sapiens (Human).